Here is a 386-residue protein sequence, read N- to C-terminus: Protein RecA (386 aa).

76-83 (GPESSGKT) serves as a coordination point for ATP. A disordered region spans residues 362–386 (FDDEDDDFDASTAPAGTFTEVTTEN).

The protein belongs to the RecA family.

It is found in the cytoplasm. Its function is as follows. Can catalyze the hydrolysis of ATP in the presence of single-stranded DNA, the ATP-dependent uptake of single-stranded DNA by duplex DNA, and the ATP-dependent hybridization of homologous single-stranded DNAs. It interacts with LexA causing its activation and leading to its autocatalytic cleavage. This is Protein RecA from Corynebacterium efficiens (strain DSM 44549 / YS-314 / AJ 12310 / JCM 11189 / NBRC 100395).